Here is a 131-residue protein sequence, read N- to C-terminus: Small ribosomal subunit protein eS8 (131 aa).

Residues 1-37 (MKLGAFYKGGDLKKPSGGKKRRVRRTKKKALGGGPPQ) are disordered. The segment covering 16–30 (SGGKKRRVRRTKKKA) has biased composition (basic residues).

This sequence belongs to the eukaryotic ribosomal protein eS8 family. In terms of assembly, part of the 30S ribosomal subunit.

This is Small ribosomal subunit protein eS8 from Pyrobaculum neutrophilum (strain DSM 2338 / JCM 9278 / NBRC 100436 / V24Sta) (Thermoproteus neutrophilus).